Here is a 139-residue protein sequence, read N- to C-terminus: Proline-rich protein 13 (139 aa).

The tract at residues 1–139 (MWNPSAGPNP…SSSSSSSDSD (139 aa)) is disordered. Composition is skewed to pro residues over residues 24-62 (ACPPSQNPAFPPGPCPPGIPQGNPAFPPCRPPYPVPQPG) and 70-91 (GPYPPPYPPAAPGMCPVNPPAP). Residues 103–124 (KTRKKMKKAHKKSHKHHKHGKH) show a composition bias toward basic residues. Residues 125–139 (SSSSSSSSSSSSDSD) show a composition bias toward low complexity.

Its subcellular location is the nucleus. Its function is as follows. Negatively regulates TSP1 expression at the level of transcription. This down-regulation was shown to reduce taxane-induced apoptosis. In Rattus norvegicus (Rat), this protein is Proline-rich protein 13 (Prr13).